Reading from the N-terminus, the 913-residue chain is Sterol uptake control protein 2 (913 aa).

A DNA-binding region (zn(2)-C6 fungal-type) is located at residues 50–80 (GCDNCKRRRVKCDEGKPACRKCTNMKLECQY). 2 disordered regions span residues 103-173 (GSVE…SMGL) and 216-258 (GNMG…LAGS). Thr-122 is subject to Phosphothreonine. Residues 150–164 (SESEEKSSAPIEDKN) are compositionally biased toward basic and acidic residues. Positions 222-241 (QLQQQQQVQQQSQPQTQAQQ) are enriched in low complexity. Residues 303–346 (QQHQQVQLQQYQQLRQEQHQQVQQQQQEQLQQYQQHFLQQQQQV) are a coiled coil. Disordered regions lie at residues 347–385 (LLQQ…TLNS) and 453–489 (MQEH…GSAS). A compositionally biased stretch (polar residues) spans 374–385 (LQSQTSETTLNS). Residues 440-472 (ATKASNAEEALANMQEHHERAAASVKENDGQLS) adopt a coiled-coil conformation. Positions 454-468 (QEHHERAAASVKEND) are enriched in basic and acidic residues. Residues 469-487 (GQLSDTKSPAPSNNAQGGS) show a composition bias toward polar residues. Residue Ser-519 is modified to Phosphoserine. The segment covering 552 to 562 (EPTISLQTSQT) has biased composition (polar residues). The segment at 552–571 (EPTISLQTSQTENEDDASRQ) is disordered.

The protein localises to the nucleus. Transcription factor that is involved in activation of anaerobic genes such as DAN/TIR cell wall mannoprotein genes and YML083c. Appears to bind to anaerobic response elements (AR1) with the consensus sequence 5'-TCGTTYAG-3' present in the promoter regions of DAN/TIR genes. Involved in sterol uptake and regulation of the sterol biosynthesis. Binds to sterol regulatory elements (SRE) with the consensus sequence 5'-TCGTATA-3' present in ERG2 and ERG3 promoters. May be involved in down-regulation of CWP2 during anaerobic adaptation. This chain is Sterol uptake control protein 2 (UPC2), found in Saccharomyces cerevisiae (strain ATCC 204508 / S288c) (Baker's yeast).